We begin with the raw amino-acid sequence, 365 residues long: Paraneoplastic antigen Ma2 homolog (365 aa).

N-acetylalanine is present on A2. Positions 336–365 (EEEDAYFEQESREEPGEREGSGCWNNSRNN) are disordered. The span at 344–355 (QESREEPGEREG) shows a compositional bias: basic and acidic residues.

The protein belongs to the PNMA family. In terms of tissue distribution, expressed in the cerebrum, cerebellum and testis.

It localises to the nucleus. The protein resides in the nucleolus. The sequence is that of Paraneoplastic antigen Ma2 homolog (Pnma2) from Mus musculus (Mouse).